A 1338-amino-acid polypeptide reads, in one-letter code: Terpene cyclase-glycosyl transferase fusion protein fsoA (1338 aa).

Residues 1–687 (MDMAPDELDE…RFLDRTDEPD (687 aa)) form a terpenne cyclase region. PFTB repeat units lie at residues 19-61 (LEQA…PALN), 69-111 (AAAL…RLLG), and 267-307 (LRRC…SLEH). Catalysis depends on D412, which acts as the Proton donor. 3 PFTB repeats span residues 434–475 (VEMG…DSLV), 515–556 (AQKA…AFCG), and 564–615 (ALRA…LRFR). Residues 688–1338 (QDRDLPLLMT…NMLLGEGCQG (651 aa)) are glycosyltransferase.

This sequence in the N-terminal section; belongs to the terpene cyclase/mutase family. It in the C-terminal section; belongs to the glycosyltransferase 28 family.

The enzyme catalyses (S)-2,3-epoxysqualene = isomotiol. It carries out the reaction isomotiol + UDP-alpha-D-glucose = 3-O-(beta-D-glucopyranosyl)-isomotiol + UDP + H(+). The catalysed reaction is 2alpha-hydroxyisomotiol + UDP-alpha-D-glucose = 3-O-(beta-D-glucopyranosyl)-2alpha-hydroxyisomotiol + UDP + H(+). The protein operates within secondary metabolite biosynthesis; terpenoid biosynthesis. In terms of biological role, terpene cyclase-glycosyl transferase fusion protein; part of the gene cluster that mediates the biosynthesis of the enfumafungin-type antibiotic, fuscoatroside. Within the pathway, fsoA plays two important roles, the cyclization of 2,3(S)-oxidosqualene into isomotiol via its terpene cyclase (TC) domain and the C3 glycosylation of several intermediates via its glycosyltransferase (GT) domain. The fuscoatroside biosynthesis is initiated by the cyclization of 2,3(S)-oxidosqualene through FsoA's TC domain, leading to the formation of the fernane skeleton isomotiol, harboring a fernane triterpene skeleton with a C8-C9 double bond. Subsequently, C2-alpha-hydroxylation mediated by fsoD results in the production of 2-alpha-hydroxy-isomotiol, which is further acetylated by fsoF. The GT domain of FsoA may convert isomotiol, 2-alpha-hydroxy-isomotiol, and the acetylated derivative of 2-alpha-hydroxy-isomotiol into their corresponding glycosides 3-O-(beta-D-glucopyranosyl)-isomotiol, 3-O-(beta-D-glucopyranosyl)-2-alpha-hydroxy-isomotiol, and 3-O-(beta-D-glucopyranosyl)-2-alpha-acetoxy-isomotiol, which then undergo oxidative cleavage under the action of fsoE to form s 2-deacetoxy-fuscoatroside, 2-deacetyl-fuscoatroside, and fuscoatroside, respectively. Although hydroxylation followed by acetylation of 3-O-(beta-D-glucopyranosyl)-isomotiol and 2-deacetoxy-fuscoatroside by fsoD and fsoF could not be ruled out, this process is likely to occur with difficulty due to bulky steric hindrance caused by the presence of a glycan at C3 in these compounds. Interestingly, fsoE can also utilize the aglycones isomotiol and 2-alpha-hydroxy-isomotiol as substrates to generate 19-beta-hydroxy-isomotiol and 2-alpha,19-beta-dihydroxy-isomotiol, respectively. These reactions occur with lower efficiency. Finally, fsoE can further convert 2-alpha,19-beta-dihydroxy-isomotiol into 2-alpha-hydroxy-ismotiol-19-one and 2-alpha-hydroxy-ismotiol-19-one into 2-deacetyl-3-deglucopyranosyl-fuscoatroside. This chain is Terpene cyclase-glycosyl transferase fusion protein fsoA, found in Humicola fuscoatra.